Here is a 79-residue protein sequence, read N- to C-terminus: Acyl carrier protein (79 aa).

The 76-residue stretch at 2–77 folds into the Carrier domain; the sequence is SEIGERVKKI…DAVKFLEKNA (76 aa). Ser37 is subject to O-(pantetheine 4'-phosphoryl)serine.

This sequence belongs to the acyl carrier protein (ACP) family. Post-translationally, 4'-phosphopantetheine is transferred from CoA to a specific serine of apo-ACP by AcpS. This modification is essential for activity because fatty acids are bound in thioester linkage to the sulfhydryl of the prosthetic group.

The protein localises to the cytoplasm. The protein operates within lipid metabolism; fatty acid biosynthesis. Its function is as follows. Carrier of the growing fatty acid chain in fatty acid biosynthesis. This is Acyl carrier protein from Rhodopseudomonas palustris (strain BisA53).